The following is a 411-amino-acid chain: Citrate synthase (411 aa).

Catalysis depends on residues histidine 304 and aspartate 363.

This sequence belongs to the citrate synthase family.

It catalyses the reaction oxaloacetate + acetyl-CoA + H2O = citrate + CoA + H(+). Its pathway is carbohydrate metabolism; tricarboxylic acid cycle; isocitrate from oxaloacetate: step 1/2. This chain is Citrate synthase (gltA), found in Rickettsia parkeri.